Reading from the N-terminus, the 264-residue chain is Proliferating cell nuclear antigen (264 aa).

Residues 61 to 80 (RCDRNISMGMNLANMAKMLK) mediate DNA binding.

This sequence belongs to the PCNA family.

The protein localises to the nucleus. In terms of biological role, this protein is an auxiliary protein of DNA polymerase delta and is involved in the control of eukaryotic DNA replication by increasing the polymerase's processibility during elongation of the leading strand. The chain is Proliferating cell nuclear antigen (PCNA) from Nicotiana tabacum (Common tobacco).